A 254-amino-acid polypeptide reads, in one-letter code: Pyruvate dehydrogenase complex repressor (254 aa).

The HTH gntR-type domain maps to 9–77; that stretch reads PKLSDVIEQQ…QGGGTFVQSS (69 aa). The H-T-H motif DNA-binding region spans 37–56; that stretch reads ERELAKQFDVSRPSLREAIQ.

Functionally, transcriptional repressor for the pyruvate dehydrogenase complex genes aceEF and lpd. This Salmonella typhi protein is Pyruvate dehydrogenase complex repressor (pdhR).